A 975-amino-acid chain; its full sequence is Homeobox protein cut-like 1 (975 aa).

The CUT 1 DNA-binding region spans 1-73 (SRQVKEQLIK…ILALRSIQGR (73 aa)). Disordered regions lie at residues 90–113 (PKRR…GSDE) and 126–148 (LQVQ…TSDD). Residues 113–169 (EAIKSILEQAKRELQVQKTAEPAQPSSTSSSGTSDDAIRSILQQARREMEAQQAALD) are a coiled coil. The residue at position 207 (Ser-207) is a Phosphoserine. The interval 209–246 (KKPPTAPDTSASTLPNPPALKKESQDAPGLDLPGAAES) is disordered. Glycyl lysine isopeptide (Lys-Gly) (interchain with G-Cter in SUMO2) cross-links involve residues Lys-229, Lys-255, and Lys-286. Positions 262 to 297 (GVWKDHWWSTVQPERKSAAPPEDAKSEEAGGTKEKG) are enriched in basic and acidic residues. The tract at residues 262–369 (GVWKDHWWST…SKPAKPSVPP (108 aa)) is disordered. Residues 328 to 351 (RTPQSSELSLTGASRSETPQNSPL) are compositionally biased toward polar residues. Ser-349 carries the phosphoserine modification. The CUT 2 DNA-binding region spans 374–461 (QYEIYMYQEV…QGVLPVQGQQ (88 aa)). Over residues 476-489 (LQQGCVSSESTPKT) the composition is skewed to polar residues. The disordered stretch occupies residues 476-549 (LQQGCVSSES…SQPATPLPLS (74 aa)). Residues 490 to 506 (SASCSPAPESPMSSSES) show a composition bias toward low complexity. A phosphoserine mark is found at Ser-499 and Ser-509. A DNA-binding region (CUT 3) is located at residues 557 to 644 (QELVAMSPEL…VEKLMDMKRM (88 aa)). The disordered stretch occupies residues 652–687 (RRHSSVSDSQPCEPPSVGIDYSQGASPQPQHQLKKP). A DNA-binding region (homeobox) is located at residues 684–743 (LKKPRVVLAPEEKEALKRAYQQKPYPSPKTIEELATQLNLKTSTVINWFHNYRSRIRREL). Ser-710 is subject to Phosphoserine. A Glycyl lysine isopeptide (Lys-Gly) (interchain with G-Cter in SUMO2) cross-link involves residue Lys-724. A disordered region spans residues 752-949 (SQGQAGARHS…DSRDNPLRKK (198 aa)). The segment covering 756–773 (AGARHSPSARSSGAAPSS) has biased composition (low complexity). A Phosphoserine modification is found at Ser-777. The span at 780-813 (GVEAAEGPGAADAEESAPAAAAKSQGGPAEAAVA) shows a compositional bias: low complexity. Residues 838-847 (PGRRGGGGPA) show a composition bias toward gly residues. Positions 850 to 860 (APAAPAAAARG) are enriched in low complexity. The span at 861 to 890 (PSRRPGARAKPRRRRRRRRRHARGGGRRYL) shows a compositional bias: basic residues. The segment covering 907–929 (RSSALPSTSAPAAARRPSSLQSL) has biased composition (low complexity). Ser-925 is subject to Phosphoserine. The span at 937–946 (GARDSRDNPL) shows a compositional bias: basic and acidic residues. Residues Ser-956 and Ser-966 each carry the phosphoserine modification.

Belongs to the CUT homeobox family. In terms of assembly, interacts with BANP. As cells progress into S phase, a fraction of CUX1 molecules is proteolytically processed into N-terminally truncated proteins of 110 kDa by CTSL. Cell cycle-dependent processing of CUX1 serves to generate a CDP/Cux p110 with distinct DNA binding and transcriptional properties. In terms of processing, phosphorylated by PKA. A broad pattern of expression observed in tissues of diverse origins, such as cartilage, liver, brain, lung, heart and skeletal muscle. There are 2 distinct protein species: the larger one (230-250 kDa) is found mainly in adult brain, lung and heart, and the smaller one (180-190 kDa) predominates in early embryonic tissues.

It localises to the nucleus. Functionally, transcription factor involved in the control of neuronal differentiation in the brain. Regulates dendrite development and branching, and dendritic spine formation in cortical layers II-III. Also involved in the control of synaptogenesis. In addition, it has probably a broad role in mammalian development as a repressor of developmentally regulated gene expression. May act by preventing binding of positively-activing CCAAT factors to promoters. Component of nf-munr repressor; binds to the matrix attachment regions (MARs) (5' and 3') of the immunoglobulin heavy chain enhancer. Represses T-cell receptor (TCR) beta enhancer function by binding to MARbeta, an ATC-rich DNA sequence located upstream of the TCR beta enhancer. Binds to the TH enhancer; may require the basic helix-loop-helix protein TCF4 as a coactivator. Its function is as follows. Plays a role in cell cycle progression, in particular at the G1/S transition. As cells progress into S phase, a fraction of CUX1 molecules is proteolytically processed into N-terminally truncated proteins of 110 kDa. While CUX1 only transiently binds to DNA and carries the CCAAT-displacement activity, CDP/Cux p110 makes a stable interaction with DNA and stimulates expression of genes such as POLA1. This chain is Homeobox protein cut-like 1 (CUX1), found in Canis lupus familiaris (Dog).